The primary structure comprises 209 residues: Uridine kinase (209 aa).

ATP is bound at residue 12–19 (GGSGGGKT).

This sequence belongs to the uridine kinase family.

It localises to the cytoplasm. The catalysed reaction is uridine + ATP = UMP + ADP + H(+). It catalyses the reaction cytidine + ATP = CMP + ADP + H(+). It participates in pyrimidine metabolism; CTP biosynthesis via salvage pathway; CTP from cytidine: step 1/3. It functions in the pathway pyrimidine metabolism; UMP biosynthesis via salvage pathway; UMP from uridine: step 1/1. This Streptococcus agalactiae serotype V (strain ATCC BAA-611 / 2603 V/R) protein is Uridine kinase.